The chain runs to 396 residues: L-tyrosine/L-aspartate decarboxylase (396 aa).

Residue Lys245 is modified to N6-(pyridoxal phosphate)lysine.

It belongs to the group II decarboxylase family. MfnA subfamily. In terms of assembly, homodimer. It depends on pyridoxal 5'-phosphate as a cofactor.

The catalysed reaction is L-tyrosine + H(+) = tyramine + CO2. The enzyme catalyses L-aspartate + H(+) = beta-alanine + CO2. Its pathway is cofactor biosynthesis; methanofuran biosynthesis. The protein operates within cofactor biosynthesis; coenzyme A biosynthesis. Inhibited by hydroxylamine and O-methylhydroxylamine. In terms of biological role, catalyzes the decarboxylation of L-tyrosine to produce tyramine for methanofuran biosynthesis. Can also catalyze the decarboxylation of L-aspartate to produce beta-alanine for coenzyme A (CoA) biosynthesis. The polypeptide is L-tyrosine/L-aspartate decarboxylase (Methanocaldococcus jannaschii (strain ATCC 43067 / DSM 2661 / JAL-1 / JCM 10045 / NBRC 100440) (Methanococcus jannaschii)).